A 349-amino-acid polypeptide reads, in one-letter code: Ribosomal RNA large subunit methyltransferase Cfr (349 aa).

Glu89 serves as the catalytic Proton acceptor. The Radical SAM core domain maps to 96–331 (KAGWESFCIS…VTVRSQFGID (236 aa)). Cys103 and Cys336 form a disulfide bridge. Cys110, Cys114, and Cys117 together coordinate [4Fe-4S] cluster. S-adenosyl-L-methionine is bound by residues 156 to 157 (GE), Ser187, 210 to 212 (SLH), and Asn291. Catalysis depends on Cys336, which acts as the S-methylcysteine intermediate.

It belongs to the radical SAM superfamily. RlmN family. Cfr subfamily. The cofactor is [4Fe-4S] cluster.

The protein localises to the cytoplasm. The enzyme catalyses adenosine(2503) in 23S rRNA + 2 reduced [2Fe-2S]-[ferredoxin] + 2 S-adenosyl-L-methionine = 8-methyladenosine(2503) in 23S rRNA + 5'-deoxyadenosine + L-methionine + 2 oxidized [2Fe-2S]-[ferredoxin] + S-adenosyl-L-homocysteine. In terms of biological role, specifically methylates position 8 of adenine 2503 in 23S rRNA. Confers resistance to some classes of antibiotics. This Bacillus velezensis (strain DSM 23117 / BGSC 10A6 / LMG 26770 / FZB42) (Bacillus amyloliquefaciens subsp. plantarum) protein is Ribosomal RNA large subunit methyltransferase Cfr.